The chain runs to 487 residues: Adenylosuccinate synthetase, chloroplastic (487 aa).

A chloroplast-targeting transit peptide spans 1–46; sequence MSLSTVNHAAAAAAAAGSGKSFSAAAPAAPSVRLPRTRAPAAAAVS. GTP contacts are provided by residues 74–80 and 102–104; these read GDEGKGK and GHT. Aspartate 75 (proton acceptor) is an active-site residue. Mg(2+) is bound by residues aspartate 75 and glycine 102. IMP-binding positions include 75-78, 100-103, threonine 192, arginine 206, glutamine 286, threonine 301, and arginine 365; these read DEGK and NAGH. Histidine 103 acts as the Proton donor in catalysis. Substrate is bound at residue 361–367; that stretch reads TTTGRPR. GTP contacts are provided by residues arginine 367, 393–395, and 476–478; these read KLD and GVG.

Belongs to the adenylosuccinate synthetase family. In terms of assembly, homodimer. It depends on Mg(2+) as a cofactor.

The protein resides in the plastid. It is found in the chloroplast. It carries out the reaction IMP + L-aspartate + GTP = N(6)-(1,2-dicarboxyethyl)-AMP + GDP + phosphate + 2 H(+). It participates in purine metabolism; AMP biosynthesis via de novo pathway; AMP from IMP: step 1/2. Its function is as follows. Plays an important role in the de novo pathway and in the salvage pathway of purine nucleotide biosynthesis. Catalyzes the first committed step in the biosynthesis of AMP from IMP. The sequence is that of Adenylosuccinate synthetase, chloroplastic from Oryza sativa subsp. indica (Rice).